Consider the following 460-residue polypeptide: Inner membrane symporter YicJ (460 aa).

The Periplasmic segment spans residues 1 to 11; that stretch reads MKSEVLSVKEK. 2 helical membrane-spanning segments follow: residues 12 to 32 and 33 to 53; these read IGYG…MLYM and MFFY…MFLV. The Periplasmic segment spans residues 54–80; it reads ARALDAISDPCMGLLADRTRSRWGKFR. A helical membrane pass occupies residues 81-101; that stretch reads PWVLFGALPFGIVCVLAYSTP. Residues 102–116 lie on the Cytoplasmic side of the membrane; sequence DLSMNGKMIYAAITY. The chain crosses the membrane as a helical span at residues 117 to 137; it reads TLLTLLYTVVNIPYCALGGVI. Residues 138–152 lie on the Periplasmic side of the membrane; it reads TNDPTQRISLQSWRF. A helical transmembrane segment spans residues 153–173; it reads VLATAGGMLSTVLMMPLVNLI. Topologically, residues 174 to 181 are cytoplasmic; it reads GGDNKPLG. The helical transmembrane segment at 182-202 threads the bilayer; it reads FQGGIAVLSVVAFMMLAFCFF. Topologically, residues 203 to 248 are periplasmic; that stretch reads TTKERVEAPPTTTSMREDLRDIWQNDQWRIVGLLTIFNILAVCVRG. The helical transmembrane segment at 249–269 threads the bilayer; that stretch reads GAMMYYVTWILGTPEVFVAFL. Residues 270 to 288 are Cytoplasmic-facing; the sequence is TTYCVGNLIGSALAKPLTD. The helical transmembrane segment at 289–309 threads the bilayer; it reads WKCKVTIFWWTNALLAVISLA. A topological domain (periplasmic) is located at residue methionine 310. The chain crosses the membrane as a helical span at residues 311 to 331; sequence FFVPMQASITMFVFIFVIGVL. The Cytoplasmic segment spans residues 332–366; it reads HQLVTPIQWVMMSDTVDYGEWCNGKRLTGISFAGT. Residues 367–387 traverse the membrane as a helical segment; the sequence is LFVLKLGLAFGGALIGWMLAY. The Periplasmic segment spans residues 388-403; sequence GGYDAAEKAQNSATIS. Residues 404-424 traverse the membrane as a helical segment; it reads IIIALFTIVPAICYLLSAIIA. Topologically, residues 425–460 are cytoplasmic; that stretch reads KRYYSLTTHNLKTVMEQLAQGKRRCQQQFTSQEVQN.

This sequence belongs to the sodium:galactoside symporter (TC 2.A.2) family.

The protein resides in the cell inner membrane. This Escherichia coli (strain K12) protein is Inner membrane symporter YicJ (yicJ).